The sequence spans 166 residues: UPF0304 protein VFMJ11_1926 (166 aa).

This sequence belongs to the UPF0304 family.

The chain is UPF0304 protein VFMJ11_1926 from Aliivibrio fischeri (strain MJ11) (Vibrio fischeri).